Reading from the N-terminus, the 308-residue chain is GTP cyclohydrolase FolE2 (308 aa).

It belongs to the GTP cyclohydrolase IV family.

It catalyses the reaction GTP + H2O = 7,8-dihydroneopterin 3'-triphosphate + formate + H(+). It participates in cofactor biosynthesis; 7,8-dihydroneopterin triphosphate biosynthesis; 7,8-dihydroneopterin triphosphate from GTP: step 1/1. Converts GTP to 7,8-dihydroneopterin triphosphate. The protein is GTP cyclohydrolase FolE2 of Idiomarina loihiensis (strain ATCC BAA-735 / DSM 15497 / L2-TR).